The chain runs to 465 residues: ATP-dependent protease ATPase subunit HslU (465 aa).

ATP contacts are provided by residues Val-19 and 61–66 (GVGKTE). Residues 153–175 (LFQSDGSDGDDETTEQDSHDEIR) form a disordered region. The ATP site is built by Asp-279, Glu-343, and Arg-415.

This sequence belongs to the ClpX chaperone family. HslU subfamily. A double ring-shaped homohexamer of HslV is capped on each side by a ring-shaped HslU homohexamer. The assembly of the HslU/HslV complex is dependent on binding of ATP.

It is found in the cytoplasm. Functionally, ATPase subunit of a proteasome-like degradation complex; this subunit has chaperone activity. The binding of ATP and its subsequent hydrolysis by HslU are essential for unfolding of protein substrates subsequently hydrolyzed by HslV. HslU recognizes the N-terminal part of its protein substrates and unfolds these before they are guided to HslV for hydrolysis. The chain is ATP-dependent protease ATPase subunit HslU from Oceanobacillus iheyensis (strain DSM 14371 / CIP 107618 / JCM 11309 / KCTC 3954 / HTE831).